The following is a 215-amino-acid chain: Imidazole glycerol phosphate synthase subunit HisH (215 aa).

The region spanning 3–215 (TAVVFDYGFG…QLLKNWIATL (213 aa)) is the Glutamine amidotransferase type-1 domain. Cys-81 (nucleophile) is an active-site residue. Residues His-196 and Glu-198 contribute to the active site.

Heterodimer of HisH and HisF.

It localises to the cytoplasm. It catalyses the reaction 5-[(5-phospho-1-deoxy-D-ribulos-1-ylimino)methylamino]-1-(5-phospho-beta-D-ribosyl)imidazole-4-carboxamide + L-glutamine = D-erythro-1-(imidazol-4-yl)glycerol 3-phosphate + 5-amino-1-(5-phospho-beta-D-ribosyl)imidazole-4-carboxamide + L-glutamate + H(+). The enzyme catalyses L-glutamine + H2O = L-glutamate + NH4(+). Its pathway is amino-acid biosynthesis; L-histidine biosynthesis; L-histidine from 5-phospho-alpha-D-ribose 1-diphosphate: step 5/9. In terms of biological role, IGPS catalyzes the conversion of PRFAR and glutamine to IGP, AICAR and glutamate. The HisH subunit catalyzes the hydrolysis of glutamine to glutamate and ammonia as part of the synthesis of IGP and AICAR. The resulting ammonia molecule is channeled to the active site of HisF. The sequence is that of Imidazole glycerol phosphate synthase subunit HisH from Bifidobacterium longum (strain NCC 2705).